A 594-amino-acid chain; its full sequence is Aspartate--tRNA(Asp/Asn) ligase (594 aa).

Residue Glu-175 coordinates L-aspartate. The aspartate stretch occupies residues 199 to 202 (QLFK). Arg-221 provides a ligand contact to L-aspartate. ATP-binding positions include 221–223 (RDE) and Gln-230. His-446 is a binding site for L-aspartate. Residue Glu-491 participates in ATP binding. Residue Arg-498 coordinates L-aspartate. Position 543 to 546 (543 to 546 (GLDR)) interacts with ATP.

This sequence belongs to the class-II aminoacyl-tRNA synthetase family. Type 1 subfamily. In terms of assembly, homodimer.

It is found in the cytoplasm. It catalyses the reaction tRNA(Asx) + L-aspartate + ATP = L-aspartyl-tRNA(Asx) + AMP + diphosphate. In terms of biological role, aspartyl-tRNA synthetase with relaxed tRNA specificity since it is able to aspartylate not only its cognate tRNA(Asp) but also tRNA(Asn). Reaction proceeds in two steps: L-aspartate is first activated by ATP to form Asp-AMP and then transferred to the acceptor end of tRNA(Asp/Asn). This Thermodesulfovibrio yellowstonii (strain ATCC 51303 / DSM 11347 / YP87) protein is Aspartate--tRNA(Asp/Asn) ligase.